A 252-amino-acid chain; its full sequence is 5-oxoprolinase subunit A (252 aa).

Belongs to the LamB/PxpA family. Forms a complex composed of PxpA, PxpB and PxpC.

The catalysed reaction is 5-oxo-L-proline + ATP + 2 H2O = L-glutamate + ADP + phosphate + H(+). In terms of biological role, catalyzes the cleavage of 5-oxoproline to form L-glutamate coupled to the hydrolysis of ATP to ADP and inorganic phosphate. In Bordetella pertussis (strain Tohama I / ATCC BAA-589 / NCTC 13251), this protein is 5-oxoprolinase subunit A.